Consider the following 967-residue polypeptide: Isoleucine--tRNA ligase (967 aa).

Positions 68 to 78 match the 'HIGH' region motif; the sequence is PYANGTLHMGH. Residue Glu-583 coordinates L-isoleucyl-5'-AMP. Residues 624–628 carry the 'KMSKS' region motif; that stretch reads KMSKS. Lys-627 is an ATP binding site. Cys-937, Cys-940, Cys-957, and Cys-960 together coordinate Zn(2+).

Belongs to the class-I aminoacyl-tRNA synthetase family. IleS type 1 subfamily. As to quaternary structure, monomer. Zn(2+) serves as cofactor.

It localises to the cytoplasm. It carries out the reaction tRNA(Ile) + L-isoleucine + ATP = L-isoleucyl-tRNA(Ile) + AMP + diphosphate. Catalyzes the attachment of isoleucine to tRNA(Ile). As IleRS can inadvertently accommodate and process structurally similar amino acids such as valine, to avoid such errors it has two additional distinct tRNA(Ile)-dependent editing activities. One activity is designated as 'pretransfer' editing and involves the hydrolysis of activated Val-AMP. The other activity is designated 'posttransfer' editing and involves deacylation of mischarged Val-tRNA(Ile). The chain is Isoleucine--tRNA ligase from Prochlorococcus marinus (strain NATL2A).